Here is a 614-residue protein sequence, read N- to C-terminus: Zinc finger and SCAN domain-containing protein 2 (614 aa).

Disordered stretches follow at residues 1 to 26 (MMAA…EDRQ) and 43 to 76 (EAVL…PQGA). An SCAN box domain is found at 59–132 (SAGKGGPQEE…ALVEDLTQTL (74 aa)). 14 C2H2-type zinc fingers span residues 222–244 (YECP…ERTH), 250–272 (YKCD…QTTH), 278–300 (YKCR…QRIH), 306–328 (FQCA…QRTH), 334–356 (YSCP…QGIH), 362–384 (YECK…QRIH), 390–412 (YKCT…RRTH), 418–440 (YQCS…RRTH), 446–468 (YKCG…QGMH), 474–496 (YECL…QRIH), 502–524 (YKCS…QRTH), 530–552 (YKCL…QRAH), 558–580 (YRCP…QRIH), and 586–608 (YKCP…QRTH).

It belongs to the krueppel C2H2-type zinc-finger protein family.

It localises to the nucleus. Functionally, may be involved in transcriptional regulation during the post-meiotic stages of spermatogenesis. The protein is Zinc finger and SCAN domain-containing protein 2 (ZSCAN2) of Homo sapiens (Human).